A 725-amino-acid chain; its full sequence is Ribonuclease R (725 aa).

The 324-residue stretch at 236–559 folds into the RNB domain; that stretch reads RKDLRDKLII…QLHRLIKQMV (324 aa). Positions 611–689 constitute an S1 motif domain; that stretch reads GKSLKAQIVS…NLGKVDVVLE (79 aa).

This sequence belongs to the RNR ribonuclease family. RNase R subfamily.

The protein resides in the cytoplasm. It catalyses the reaction Exonucleolytic cleavage in the 3'- to 5'-direction to yield nucleoside 5'-phosphates.. 3'-5' exoribonuclease that releases 5'-nucleoside monophosphates and is involved in maturation of structured RNAs. The sequence is that of Ribonuclease R from Mycoplasmopsis pulmonis (strain UAB CTIP) (Mycoplasma pulmonis).